Reading from the N-terminus, the 293-residue chain is Triosephosphate isomerase (293 aa).

25-27 (NWK) serves as a coordination point for substrate. Residue histidine 117 is the Electrophile of the active site. The Proton acceptor role is filled by glutamate 218.

The protein belongs to the triosephosphate isomerase family. Homodimer.

It is found in the cytoplasm. The enzyme catalyses D-glyceraldehyde 3-phosphate = dihydroxyacetone phosphate. It participates in carbohydrate biosynthesis; gluconeogenesis. It functions in the pathway carbohydrate degradation; glycolysis; D-glyceraldehyde 3-phosphate from glycerone phosphate: step 1/1. In terms of biological role, involved in the gluconeogenesis. Catalyzes stereospecifically the conversion of dihydroxyacetone phosphate (DHAP) to D-glyceraldehyde-3-phosphate (G3P). The protein is Triosephosphate isomerase of Tropheryma whipplei (strain Twist) (Whipple's bacillus).